Here is a 257-residue protein sequence, read N- to C-terminus: Peptide methionine sulfoxide reductase (257 aa).

Positions 61–88 (LGFGSRPQPDPAASSAIAQGPDDDVPSP) are disordered. S244 bears the Phosphoserine mark.

Belongs to the MsrA Met sulfoxide reductase family.

The catalysed reaction is L-methionyl-[protein] + [thioredoxin]-disulfide + H2O = L-methionyl-(S)-S-oxide-[protein] + [thioredoxin]-dithiol. It carries out the reaction [thioredoxin]-disulfide + L-methionine + H2O = L-methionine (S)-S-oxide + [thioredoxin]-dithiol. Has an important function as a repair enzyme for proteins that have been inactivated by oxidation. Catalyzes the reversible oxidation-reduction of methionine sulfoxide in proteins to methionine. The protein is Peptide methionine sulfoxide reductase (PMSR) of Brassica napus (Rape).